The sequence spans 70 residues: ATP synthase subunit c (70 aa).

Transmembrane regions (helical) follow at residues 4-24 (IAAAIAIGLSALGAGIGNGLI) and 45-65 (IMFIGIGLVEALPIIGVVIAF).

Belongs to the ATPase C chain family. In terms of assembly, F-type ATPases have 2 components, F(1) - the catalytic core - and F(0) - the membrane proton channel. F(1) has five subunits: alpha(3), beta(3), gamma(1), delta(1), epsilon(1). F(0) has three main subunits: a(1), b(2) and c(10-14). The alpha and beta chains form an alternating ring which encloses part of the gamma chain. F(1) is attached to F(0) by a central stalk formed by the gamma and epsilon chains, while a peripheral stalk is formed by the delta and b chains.

It localises to the cell membrane. Functionally, f(1)F(0) ATP synthase produces ATP from ADP in the presence of a proton or sodium gradient. F-type ATPases consist of two structural domains, F(1) containing the extramembraneous catalytic core and F(0) containing the membrane proton channel, linked together by a central stalk and a peripheral stalk. During catalysis, ATP synthesis in the catalytic domain of F(1) is coupled via a rotary mechanism of the central stalk subunits to proton translocation. Its function is as follows. Key component of the F(0) channel; it plays a direct role in translocation across the membrane. A homomeric c-ring of between 10-14 subunits forms the central stalk rotor element with the F(1) delta and epsilon subunits. The protein is ATP synthase subunit c of Staphylococcus haemolyticus (strain JCSC1435).